A 67-amino-acid chain; its full sequence is Conotoxin Cl6.10 (67 aa).

An N-terminal signal peptide occupies residues 1–24 (MKLTCVLIAAVLLLAVCQLDSADA). The propeptide occupies 25–37 (TAYMRKDPSLRSP). Cystine bridges form between cysteine 43/cysteine 57, cysteine 50/cysteine 61, and cysteine 56/cysteine 65.

Belongs to the conotoxin O1 superfamily. As to expression, expressed by the venom duct.

It localises to the secreted. This chain is Conotoxin Cl6.10, found in Californiconus californicus (California cone).